We begin with the raw amino-acid sequence, 473 residues long: Ribulose bisphosphate carboxylase large chain (473 aa).

The substrate site is built by asparagine 116 and threonine 166. Catalysis depends on lysine 168, which acts as the Proton acceptor. Lysine 170 contacts substrate. Residues lysine 194, aspartate 196, and glutamate 197 each coordinate Mg(2+). The residue at position 194 (lysine 194) is an N6-carboxylysine. The Proton acceptor role is filled by histidine 287. The substrate site is built by arginine 288, histidine 320, and serine 372.

This sequence belongs to the RuBisCO large chain family. Type I subfamily. In terms of assembly, heterohexadecamer of 8 large chains and 8 small chains. It depends on Mg(2+) as a cofactor.

It catalyses the reaction 2 (2R)-3-phosphoglycerate + 2 H(+) = D-ribulose 1,5-bisphosphate + CO2 + H2O. The enzyme catalyses D-ribulose 1,5-bisphosphate + O2 = 2-phosphoglycolate + (2R)-3-phosphoglycerate + 2 H(+). In terms of biological role, ruBisCO catalyzes two reactions: the carboxylation of D-ribulose 1,5-bisphosphate, the primary event in carbon dioxide fixation, as well as the oxidative fragmentation of the pentose substrate. Both reactions occur simultaneously and in competition at the same active site. The polypeptide is Ribulose bisphosphate carboxylase large chain (Rhodobacter capsulatus (strain ATCC BAA-309 / NBRC 16581 / SB1003)).